The sequence spans 326 residues: Phospho-N-acetylmuramoyl-pentapeptide-transferase (326 aa).

Helical transmembrane passes span 3–23 (ISIS…PAFI), 51–71 (TMGG…FALF), 79–99 (VGMI…DDFL), 115–135 (LALQ…GGDI), 138–158 (VFGY…FWLV), 169–189 (GVDG…GVIA), 195–215 (MDIL…FIFN), 221–243 (VFMG…MALH), and 306–326 (FFFW…LYLM).

Belongs to the glycosyltransferase 4 family. MraY subfamily. The cofactor is Mg(2+).

The protein resides in the cell membrane. The enzyme catalyses UDP-N-acetyl-alpha-D-muramoyl-L-alanyl-gamma-D-glutamyl-L-lysyl-D-alanyl-D-alanine + di-trans,octa-cis-undecaprenyl phosphate = Mur2Ac(oyl-L-Ala-gamma-D-Glu-L-Lys-D-Ala-D-Ala)-di-trans,octa-cis-undecaprenyl diphosphate + UMP. It participates in cell wall biogenesis; peptidoglycan biosynthesis. Functionally, catalyzes the initial step of the lipid cycle reactions in the biosynthesis of the cell wall peptidoglycan: transfers peptidoglycan precursor phospho-MurNAc-pentapeptide from UDP-MurNAc-pentapeptide onto the lipid carrier undecaprenyl phosphate, yielding undecaprenyl-pyrophosphoryl-MurNAc-pentapeptide, known as lipid I. This is Phospho-N-acetylmuramoyl-pentapeptide-transferase from Streptococcus pneumoniae (strain 70585).